The chain runs to 69 residues: Small ribosomal subunit protein bS21 (69 aa).

The segment at 50 to 69 (KAFKRKQAKKVRKLKQKTNR) is disordered.

This sequence belongs to the bacterial ribosomal protein bS21 family.

The protein is Small ribosomal subunit protein bS21 of Borrelia garinii subsp. bavariensis (strain ATCC BAA-2496 / DSM 23469 / PBi) (Borreliella bavariensis).